The chain runs to 198 residues: Recombination protein RecR (198 aa).

The segment at 57–72 adopts a C4-type zinc-finger fold; that stretch reads CSVCGHITDKDPCYIC. The region spanning 80–175 is the Toprim domain; the sequence is SVICVVQESK…KVTRIAHGLP (96 aa).

Belongs to the RecR family.

In terms of biological role, may play a role in DNA repair. It seems to be involved in an RecBC-independent recombinational process of DNA repair. It may act with RecF and RecO. This chain is Recombination protein RecR, found in Listeria welshimeri serovar 6b (strain ATCC 35897 / DSM 20650 / CCUG 15529 / CIP 8149 / NCTC 11857 / SLCC 5334 / V8).